A 206-amino-acid chain; its full sequence is Small ribosomal subunit protein uS4 (206 aa).

Positions 96-156 (GRLDNVVYRM…EKSKKQARIK (61 aa)) constitute an S4 RNA-binding domain.

Belongs to the universal ribosomal protein uS4 family. Part of the 30S ribosomal subunit. Contacts protein S5. The interaction surface between S4 and S5 is involved in control of translational fidelity.

In terms of biological role, one of the primary rRNA binding proteins, it binds directly to 16S rRNA where it nucleates assembly of the body of the 30S subunit. With S5 and S12 plays an important role in translational accuracy. This is Small ribosomal subunit protein uS4 from Haemophilus influenzae (strain 86-028NP).